Consider the following 245-residue polypeptide: tRNA pseudouridine synthase A 2 (245 aa).

The active-site Nucleophile is the D53. Y111 is a binding site for substrate.

It belongs to the tRNA pseudouridine synthase TruA family. Homodimer.

The enzyme catalyses uridine(38/39/40) in tRNA = pseudouridine(38/39/40) in tRNA. Its function is as follows. Formation of pseudouridine at positions 38, 39 and 40 in the anticodon stem and loop of transfer RNAs. The chain is tRNA pseudouridine synthase A 2 from Bacillus thuringiensis subsp. konkukian (strain 97-27).